Here is a 258-residue protein sequence, read N- to C-terminus: Short-chain dehydrogenase reductase 3c (258 aa).

12–36 lines the NAD(+) pocket; it reads IITGGASGIGADAARLFTDHGAKVV. Ser-144 provides a ligand contact to substrate. Tyr-156 (proton acceptor) is an active-site residue.

Belongs to the short-chain dehydrogenases/reductases (SDR) family.

In Arabidopsis thaliana (Mouse-ear cress), this protein is Short-chain dehydrogenase reductase 3c (SDR3c).